We begin with the raw amino-acid sequence, 133 residues long: ATP synthase epsilon chain (133 aa).

It belongs to the ATPase epsilon chain family. F-type ATPases have 2 components, CF(1) - the catalytic core - and CF(0) - the membrane proton channel. CF(1) has five subunits: alpha(3), beta(3), gamma(1), delta(1), epsilon(1). CF(0) has three main subunits: a, b and c.

Its subcellular location is the cell membrane. Functionally, produces ATP from ADP in the presence of a proton gradient across the membrane. The polypeptide is ATP synthase epsilon chain (Bacillus mycoides (strain KBAB4) (Bacillus weihenstephanensis)).